Reading from the N-terminus, the 419-residue chain is BTB/POZ domain-containing protein KCTD20 (419 aa).

The 75-residue stretch at 117-191 folds into the BTB domain; the sequence is EKVTLLVDGT…YKTGIINCPD (75 aa).

In terms of assembly, interacts with AKT1; AKT2 and AKT3. Associates with PP2CA. Part of a complex containing MARK4.

It localises to the cytoplasm. Its function is as follows. Promotes the phosphorylation of AKT family members. The sequence is that of BTB/POZ domain-containing protein KCTD20 (KCTD20) from Homo sapiens (Human).